The primary structure comprises 38 residues: Defensin-1 (38 aa).

Intrachain disulfides connect C4–C25, C11–C33, and C15–C35.

Its subcellular location is the secreted. Functionally, has antibacterial activity against the Gram-positive bacteria L.lactis and S.aureus, and against the Gram-negative bacteria E.coli D32 and V.parahemolyticus. The chain is Defensin-1 from Crassostrea virginica (Eastern oyster).